Reading from the N-terminus, the 30-residue chain is Ribonuclease pancreatic (30 aa).

Over residues 1–13 (KETAAAKFERQHM) the composition is skewed to basic and acidic residues. The segment at 1 to 21 (KETAAAKFERQHMDPAPAAAX) is disordered. Substrate-binding residues include lysine 7 and arginine 10. Histidine 12 acts as the Proton acceptor in catalysis.

Belongs to the pancreatic ribonuclease family. Monomer. Interacts with and forms tight 1:1 complexes with RNH1. Dimerization of two such complexes may occur. Interaction with RNH1 inhibits this protein. Pancreas.

It is found in the secreted. It catalyses the reaction an [RNA] containing cytidine + H2O = an [RNA]-3'-cytidine-3'-phosphate + a 5'-hydroxy-ribonucleotide-3'-[RNA].. The catalysed reaction is an [RNA] containing uridine + H2O = an [RNA]-3'-uridine-3'-phosphate + a 5'-hydroxy-ribonucleotide-3'-[RNA].. In terms of biological role, endonuclease that catalyzes the cleavage of RNA on the 3' side of pyrimidine nucleotides. Acts on single-stranded and double-stranded RNA. This is Ribonuclease pancreatic (RNASE1) from Odocoileus virginianus virginianus (Virginia white-tailed deer).